We begin with the raw amino-acid sequence, 442 residues long: Elongation factor 1-gamma (442 aa).

Residues 2-87 form the GST N-terminal domain; the sequence is AAGTLYTYPE…FLSNDALRGS (86 aa). The region spanning 88–216 is the GST C-terminal domain; it reads TPQASAQVLQ…VKLCEKMAQF (129 aa). Basic and acidic residues-rich tracts occupy residues 224–242 and 249–263; these read MQPK…KEGG and QEKK…KAAP. Residues 224 to 273 form a disordered region; sequence MQPKKEAPAKKEKAGKEGGKQQQPQQEKKEKKKEEKKAAPAEEEMDECEA. The EF-1-gamma C-terminal domain maps to 281–442; that stretch reads AKDPYAHLPK…KSFNQGKIFK (162 aa).

In terms of assembly, EF-1 is composed of four subunits: alpha, beta, delta, and gamma.

Functionally, probably plays a role in anchoring the complex to other cellular components. This is Elongation factor 1-gamma (eef1g) from Carassius auratus (Goldfish).